We begin with the raw amino-acid sequence, 182 residues long: Orotate phosphoribosyltransferase (182 aa).

Residues Arg96, Lys97, Lys100, His102, and Glu122–Ser130 contribute to the 5-phospho-alpha-D-ribose 1-diphosphate site. Residues Thr126 and Arg154 each contribute to the orotate site.

Belongs to the purine/pyrimidine phosphoribosyltransferase family. PyrE subfamily. As to quaternary structure, homodimer. The cofactor is Mg(2+).

The catalysed reaction is orotidine 5'-phosphate + diphosphate = orotate + 5-phospho-alpha-D-ribose 1-diphosphate. It functions in the pathway pyrimidine metabolism; UMP biosynthesis via de novo pathway; UMP from orotate: step 1/2. Functionally, catalyzes the transfer of a ribosyl phosphate group from 5-phosphoribose 1-diphosphate to orotate, leading to the formation of orotidine monophosphate (OMP). The protein is Orotate phosphoribosyltransferase of Streptomyces coelicolor (strain ATCC BAA-471 / A3(2) / M145).